Here is a 435-residue protein sequence, read N- to C-terminus: Elongation factor 1-alpha (435 aa).

Residues 4–229 (KPHLNLIVIG…DQLEIPPKPV (226 aa)) enclose the tr-type G domain. The tract at residues 13-20 (GHVDHGKS) is G1. 13-20 (GHVDHGKS) is a binding site for GTP. Residue Ser20 coordinates Mg(2+). The segment at 69–73 (GVTIN) is G2. The interval 90–93 (DAPG) is G3. GTP-binding positions include 90–94 (DAPGH) and 152–155 (NKMD). Residues 152 to 155 (NKMD) are G4. Residues 193 to 195 (VAP) form a G5 region.

It belongs to the TRAFAC class translation factor GTPase superfamily. Classic translation factor GTPase family. EF-Tu/EF-1A subfamily.

It is found in the cytoplasm. It catalyses the reaction GTP + H2O = GDP + phosphate + H(+). GTP hydrolase that promotes the GTP-dependent binding of aminoacyl-tRNA to the A-site of ribosomes during protein biosynthesis. This is Elongation factor 1-alpha from Sulfurisphaera tokodaii (strain DSM 16993 / JCM 10545 / NBRC 100140 / 7) (Sulfolobus tokodaii).